Here is a 208-residue protein sequence, read N- to C-terminus: Large ribosomal subunit protein uL4 (208 aa).

The tract at residues 45 to 96 is disordered; it reads RQGTHKSKTRAEVRGGGRKPYRQKGTGNARQGSTRSPLMVGGGTIFGPTPHG. Over residues 69–80 the composition is skewed to polar residues; the sequence is GTGNARQGSTRS.

The protein belongs to the universal ribosomal protein uL4 family. In terms of assembly, part of the 50S ribosomal subunit.

Its function is as follows. One of the primary rRNA binding proteins, this protein initially binds near the 5'-end of the 23S rRNA. It is important during the early stages of 50S assembly. It makes multiple contacts with different domains of the 23S rRNA in the assembled 50S subunit and ribosome. Forms part of the polypeptide exit tunnel. The sequence is that of Large ribosomal subunit protein uL4 from Chlorobium phaeovibrioides (strain DSM 265 / 1930) (Prosthecochloris vibrioformis (strain DSM 265)).